The sequence spans 185 residues: Elongation factor P (185 aa).

Belongs to the elongation factor P family.

Its subcellular location is the cytoplasm. It functions in the pathway protein biosynthesis; polypeptide chain elongation. In terms of biological role, involved in peptide bond synthesis. Stimulates efficient translation and peptide-bond synthesis on native or reconstituted 70S ribosomes in vitro. Probably functions indirectly by altering the affinity of the ribosome for aminoacyl-tRNA, thus increasing their reactivity as acceptors for peptidyl transferase. This chain is Elongation factor P, found in Dictyoglomus thermophilum (strain ATCC 35947 / DSM 3960 / H-6-12).